The primary structure comprises 72 residues: Putative snRNP Sm-like protein (72 aa).

A Sm domain is found at 4–72; that stretch reads RPLDILNNAL…RGDNVVYVSP (69 aa).

It belongs to the snRNP Sm proteins family.

This Methanosarcina acetivorans (strain ATCC 35395 / DSM 2834 / JCM 12185 / C2A) protein is Putative snRNP Sm-like protein.